A 273-amino-acid chain; its full sequence is Eukaryotic translation initiation factor 3 subunit G-2 (273 aa).

Positions 168–192 (PPFMKDGGGGSGGKNWGRGRDRDDS) are disordered. Residues 173–183 (DGGGGSGGKNW) are compositionally biased toward gly residues. Positions 193-271 (SAVRISNLSE…LILCVEWSKP (79 aa)) constitute an RRM domain.

Belongs to the eIF-3 subunit G family. As to quaternary structure, component of the eukaryotic translation initiation factor 3 (eIF-3) complex. The eIF-3 complex interacts with pix.

It is found in the cytoplasm. RNA-binding component of the eukaryotic translation initiation factor 3 (eIF-3) complex, which is involved in protein synthesis of a specialized repertoire of mRNAs and, together with other initiation factors, stimulates binding of mRNA and methionyl-tRNAi to the 40S ribosome. The eIF-3 complex specifically targets and initiates translation of a subset of mRNAs involved in cell proliferation. This subunit can bind 18S rRNA. This chain is Eukaryotic translation initiation factor 3 subunit G-2, found in Drosophila erecta (Fruit fly).